Consider the following 416-residue polypeptide: Histone acetyltransferase type B catalytic subunit (416 aa).

Residue A2 is modified to N-acetylalanine. K6 and K12 each carry N6-acetyllysine. An interaction with histone H4 N-terminus region spans residues 59 to 61 (DDE). S187 carries the post-translational modification Phosphoserine. Residues 222-224 (YNY) form an interaction with histone H4 N-terminus region. Acetyl-CoA contacts are provided by residues 238–240 (MLI) and 245–251 (QGQGHGA). E273 functions as the Proton donor/acceptor in the catalytic mechanism. A Phosphoserine modification is found at S340.

This sequence belongs to the HAT1 family. As to quaternary structure, catalytic subunit of the type B histone acetyltransferase (HAT) complex, composed of RBBP7 and HAT1. Interacts with histones H4 and H2A. The interaction is dependent of the ability of RBBP7 to bind to the N-terminus of histones. Component of the histone H3.1 and H3.3 complexes. Post-translationally, phosphorylated by AMPK at Ser-187; phosphorylation increases HAT1 activity.

The protein localises to the nucleus matrix. It is found in the mitochondrion. The catalysed reaction is L-lysyl-[protein] + acetyl-CoA = N(6)-acetyl-L-lysyl-[protein] + CoA + H(+). Histone acetyltransferase that plays a role in different biological processes including cell cycle progression, glucose metabolism, histone production or DNA damage repair. Coordinates histone production and acetylation via H4 promoter binding. Acetylates histone H4 at 'Lys-5' (H4K5ac) and 'Lys-12' (H4K12ac) and, to a lesser extent, histone H2A at 'Lys-5' (H2AK5ac). Drives H4 production by chromatin binding to support chromatin replication and acetylation. Since transcription of H4 genes is tightly coupled to S-phase, plays an important role in S-phase entry and progression. Promotes homologous recombination in DNA repair by facilitating histone turnover and incorporation of acetylated H3.3 at sites of double-strand breaks. In addition, acetylates other substrates such as chromatin-related proteins. Also acetylates RSAD2 which mediates the interaction of ubiquitin ligase UBE4A with RSAD2 leading to RSAD2 ubiquitination and subsequent degradation. This is Histone acetyltransferase type B catalytic subunit (Hat1) from Mus musculus (Mouse).